The primary structure comprises 206 residues: Holliday junction branch migration complex subunit RuvA (206 aa).

Positions 1 to 64 (MIGKLKGTVD…EDQIRLFGFV (64 aa)) are domain I. The domain II stretch occupies residues 65–143 (TEAEREWFRL…AFTAADPGLA (79 aa)). The interval 144–154 (RLAADVEATEA) is flexible linker. Residues 154-206 (AAGGALADAVSALVNLGYGQAQAHTAIAAAGRKAGEDATTETLIRLGLKELAK) form a domain III region.

It belongs to the RuvA family. As to quaternary structure, homotetramer. Forms an RuvA(8)-RuvB(12)-Holliday junction (HJ) complex. HJ DNA is sandwiched between 2 RuvA tetramers; dsDNA enters through RuvA and exits via RuvB. An RuvB hexamer assembles on each DNA strand where it exits the tetramer. Each RuvB hexamer is contacted by two RuvA subunits (via domain III) on 2 adjacent RuvB subunits; this complex drives branch migration. In the full resolvosome a probable DNA-RuvA(4)-RuvB(12)-RuvC(2) complex forms which resolves the HJ.

It is found in the cytoplasm. In terms of biological role, the RuvA-RuvB-RuvC complex processes Holliday junction (HJ) DNA during genetic recombination and DNA repair, while the RuvA-RuvB complex plays an important role in the rescue of blocked DNA replication forks via replication fork reversal (RFR). RuvA specifically binds to HJ cruciform DNA, conferring on it an open structure. The RuvB hexamer acts as an ATP-dependent pump, pulling dsDNA into and through the RuvAB complex. HJ branch migration allows RuvC to scan DNA until it finds its consensus sequence, where it cleaves and resolves the cruciform DNA. This chain is Holliday junction branch migration complex subunit RuvA, found in Azorhizobium caulinodans (strain ATCC 43989 / DSM 5975 / JCM 20966 / LMG 6465 / NBRC 14845 / NCIMB 13405 / ORS 571).